The sequence spans 173 residues: Putative C-type lectin protein FPV198 (173 aa).

In terms of domain architecture, C-type lectin spans 50–169 (GMSGWVQINN…CNKKHTGICF (120 aa)).

The chain is Putative C-type lectin protein FPV198 from Vertebrata (FPV).